A 365-amino-acid chain; its full sequence is Synapse-associated protein 1 (365 aa).

The interval 1–65 is disordered; it reads MFGGLSSWLG…QPPTEDPQFL (65 aa). Positions 52 to 62 are enriched in low complexity; it reads EQQQQPPTEDP. The 53-residue stretch at 172–224 folds into the BSD domain; sequence VQFNFDFDQMYPVALVMLQEDELLSKMRFALVPKLVKEEVFWRNYFYRISLIK. A disordered region spans residues 237 to 259; it reads QASGKEEKSSNRDDNLPLTEAVR. Residues 240–251 show a composition bias toward basic and acidic residues; the sequence is GKEEKSSNRDDN. Thr262 is subject to Phosphothreonine. Phosphoserine is present on residues Ser283, Ser298, and Ser327. Positions 344–365 are disordered; the sequence is VAESEKRDENWDKEIEKMLQES. Basic and acidic residues predominate over residues 346–365; it reads ESEKRDENWDKEIEKMLQES.

Interacts (via phosphorylated form and BSD domain) with AKT1; this interaction is enhanced in a mTORC2-mediated manner in response to epidermal growth factor (EGF) stimulation and activates AKT1. Phosphorylated. Phosphorylation increases in a mTORC2-mediated manner in response to epidermal growth factor (EGF) stimulation. Expressed in the liver, kidney, skeletal muscle and in white and brown adipose tissues. Expressed in the cortex, cerebellum, thalamus, hippocampus, braistem, olfactory bulb, spinal cord and striatum of the brain. Expressed in most neuropil regions containing glutamatergic synaptic terminals. Expressed in the CA1, CA2 and CA3 perikarya of the hippocampus. Expressed in neurons and Purkinje cells (at the protein level).

It localises to the cytoplasm. Its subcellular location is the perinuclear region. It is found in the golgi apparatus. The protein resides in the perikaryon. The protein localises to the cell projection. It localises to the axon. Its subcellular location is the dendrite. It is found in the growth cone. The protein resides in the presynaptic cell membrane. The protein localises to the postsynaptic cell membrane. It localises to the membrane. In terms of biological role, plays a role in adipocyte differentiation by promoting mTORC2-mediated phosphorylation of AKT1 at 'Ser-473' after growth factor stimulation. The sequence is that of Synapse-associated protein 1 from Mus musculus (Mouse).